Reading from the N-terminus, the 340-residue chain is Transcription initiation factor IIB (340 aa).

The TFIIB-type zinc finger occupies valine 16–glycine 49. Zn(2+)-binding residues include cysteine 20, cysteine 23, cysteine 41, and cysteine 44. Repeat copies occupy residues methionine 128–arginine 204 and phenylalanine 239–alanine 315.

This sequence belongs to the TFIIB family. As to quaternary structure, associates with TFIID-IIA (DA complex) to form TFIID-IIA-IIB (DAB-complex) which is then recognized by polymerase II.

The protein localises to the nucleus. General factor that plays a major role in the activation of eukaryotic genes transcribed by RNA polymerase II. This chain is Transcription initiation factor IIB (sua7), found in Schizosaccharomyces pombe (strain 972 / ATCC 24843) (Fission yeast).